Here is a 379-residue protein sequence, read N- to C-terminus: Homoserine O-succinyltransferase (379 aa).

The 310-residue stretch at 51–360 (NAVLICHALS…DAPQGHDAFL (310 aa)) folds into the AB hydrolase-1 domain. Ser157 acts as the Nucleophile in catalysis. A substrate-binding site is contributed by Arg227. Active-site residues include Asp323 and His356. Asp357 is a substrate binding site.

Belongs to the AB hydrolase superfamily. MetX family. As to quaternary structure, homodimer.

The protein localises to the cytoplasm. The enzyme catalyses L-homoserine + succinyl-CoA = O-succinyl-L-homoserine + CoA. The protein operates within amino-acid biosynthesis; L-methionine biosynthesis via de novo pathway; O-succinyl-L-homoserine from L-homoserine: step 1/1. In terms of biological role, transfers a succinyl group from succinyl-CoA to L-homoserine, forming succinyl-L-homoserine. The polypeptide is Homoserine O-succinyltransferase (Pseudomonas savastanoi pv. phaseolicola (strain 1448A / Race 6) (Pseudomonas syringae pv. phaseolicola (strain 1448A / Race 6))).